The sequence spans 368 residues: uncharacterized protein (368 aa).

This is an uncharacterized protein from Rickettsia prowazekii (strain Madrid E).